The chain runs to 314 residues: Coiled-coil domain-containing protein 42 like-2 (314 aa).

2 coiled-coil regions span residues 34–139 (RLLE…RQEK) and 175–233 (NKLL…WESR).

Belongs to the CFAP73 family.

This chain is Coiled-coil domain-containing protein 42 like-2, found in Xenopus laevis (African clawed frog).